The primary structure comprises 157 residues: Transcription antitermination protein NusB (157 aa).

The protein belongs to the NusB family.

In terms of biological role, involved in transcription antitermination. Required for transcription of ribosomal RNA (rRNA) genes. Binds specifically to the boxA antiterminator sequence of the ribosomal RNA (rrn) operons. This is Transcription antitermination protein NusB from Helicobacter hepaticus (strain ATCC 51449 / 3B1).